We begin with the raw amino-acid sequence, 222 residues long: N-(5'-phosphoribosyl)anthranilate isomerase (222 aa).

The protein belongs to the TrpF family.

It carries out the reaction N-(5-phospho-beta-D-ribosyl)anthranilate = 1-(2-carboxyphenylamino)-1-deoxy-D-ribulose 5-phosphate. The protein operates within amino-acid biosynthesis; L-tryptophan biosynthesis; L-tryptophan from chorismate: step 3/5. The chain is N-(5'-phosphoribosyl)anthranilate isomerase from Rhizobium johnstonii (strain DSM 114642 / LMG 32736 / 3841) (Rhizobium leguminosarum bv. viciae).